Reading from the N-terminus, the 532-residue chain is Phosphoenolpyruvate carboxylase (532 aa).

It belongs to the PEPCase type 2 family. Homotetramer. Mg(2+) is required as a cofactor.

The enzyme catalyses oxaloacetate + phosphate = phosphoenolpyruvate + hydrogencarbonate. Its function is as follows. Catalyzes the irreversible beta-carboxylation of phosphoenolpyruvate (PEP) to form oxaloacetate (OAA), a four-carbon dicarboxylic acid source for the tricarboxylic acid cycle. The polypeptide is Phosphoenolpyruvate carboxylase (Methanopyrus kandleri (strain AV19 / DSM 6324 / JCM 9639 / NBRC 100938)).